The sequence spans 144 residues: D-aminoacyl-tRNA deacylase (144 aa).

Residues 136–137 (GP) carry the Gly-cisPro motif, important for rejection of L-amino acids motif.

This sequence belongs to the DTD family. Homodimer.

Its subcellular location is the cytoplasm. The enzyme catalyses glycyl-tRNA(Ala) + H2O = tRNA(Ala) + glycine + H(+). It catalyses the reaction a D-aminoacyl-tRNA + H2O = a tRNA + a D-alpha-amino acid + H(+). Functionally, an aminoacyl-tRNA editing enzyme that deacylates mischarged D-aminoacyl-tRNAs. Also deacylates mischarged glycyl-tRNA(Ala), protecting cells against glycine mischarging by AlaRS. Acts via tRNA-based rather than protein-based catalysis; rejects L-amino acids rather than detecting D-amino acids in the active site. By recycling D-aminoacyl-tRNA to D-amino acids and free tRNA molecules, this enzyme counteracts the toxicity associated with the formation of D-aminoacyl-tRNA entities in vivo and helps enforce protein L-homochirality. This is D-aminoacyl-tRNA deacylase from Pasteurella multocida (strain Pm70).